Reading from the N-terminus, the 212-residue chain is Ependymin (212 aa).

Residues 1 to 20 (MRLTGLLCVALWSASAVVLA) form the signal peptide. Residues N69, N92, and N112 are each glycosylated (N-linked (GlcNAc...) asparagine).

It belongs to the ependymin family. As to quaternary structure, forms disulfide-linked dimers. In terms of processing, binds calcium through the terminal sialic acids. In terms of tissue distribution, EPDs are synthesized in the meninx and secreted in the cerebrospinal fluid.

Its subcellular location is the secreted. Functionally, may play a role in neural plasticity. May be involved during axon regeneration. In Clupea harengus (Atlantic herring), this protein is Ependymin (epd).